Here is a 174-residue protein sequence, read N- to C-terminus: Peptide methionine sulfoxide reductase MsrA (174 aa).

Cys-11 is an active-site residue.

This sequence belongs to the MsrA Met sulfoxide reductase family.

The enzyme catalyses L-methionyl-[protein] + [thioredoxin]-disulfide + H2O = L-methionyl-(S)-S-oxide-[protein] + [thioredoxin]-dithiol. It carries out the reaction [thioredoxin]-disulfide + L-methionine + H2O = L-methionine (S)-S-oxide + [thioredoxin]-dithiol. Has an important function as a repair enzyme for proteins that have been inactivated by oxidation. Catalyzes the reversible oxidation-reduction of methionine sulfoxide in proteins to methionine. This Haloquadratum walsbyi (strain DSM 16790 / HBSQ001) protein is Peptide methionine sulfoxide reductase MsrA.